The sequence spans 224 residues: MDEAIIVDAEFVAPVGTTAGEFVPIDRAPAAGLLLLVAFVVLYAKVISKLGKPAIQEFLWEIITRIVPSKQLRRRKEAQLRAIEVHTQRSNTSSQDQFAKWAKLDREYGKLKVEIEDINNLLTASKARFFTIISSAIFLSTTGMKMFLRIKHRKAAIFWLPKNAFPYPIEYILSFSSAPLGSVSVSAWLMICDAAMDLIVTIFVALVVGVIGMLRSNKVKPKTA.

At 1–33 (MDEAIIVDAEFVAPVGTTAGEFVPIDRAPAAGL) the chain is on the lumenal side. Residues 34–53 (LLLVAFVVLYAKVISKLGKP) traverse the membrane as a helical segment. Topologically, residues 54 to 137 (AIQEFLWEII…RFFTIISSAI (84 aa)) are cytoplasmic. Residues 102 to 124 (AKLDREYGKLKVEIEDINNLLTA) adopt a coiled-coil conformation. Residues 138–158 (FLSTTGMKMFLRIKHRKAAIF) traverse the membrane as a helical segment. Topologically, residues 159–182 (WLPKNAFPYPIEYILSFSSAPLGS) are lumenal. A helical transmembrane segment spans residues 183–199 (VSVSAWLMICDAAMDLI). At 200-224 (VTIFVALVVGVIGMLRSNKVKPKTA) the chain is on the cytoplasmic side.

The protein belongs to the WRB/GET1 family. In terms of assembly, component of the Golgi to ER traffic (GET) complex, which is composed of GET1, GET2 and GET3. Within the complex, GET1 and GET2 form a heterotetramer which is stabilized by phosphatidylinositol binding and which binds to the GET3 homodimer.

It localises to the endoplasmic reticulum membrane. The protein resides in the golgi apparatus membrane. Functionally, required for the post-translational delivery of tail-anchored (TA) proteins to the endoplasmic reticulum. Together with GET2, acts as a membrane receptor for soluble GET3, which recognizes and selectively binds the transmembrane domain of TA proteins in the cytosol. The GET complex cooperates with the HDEL receptor ERD2 to mediate the ATP-dependent retrieval of resident ER proteins that contain a C-terminal H-D-E-L retention signal from the Golgi to the ER. In Yarrowia lipolytica (strain CLIB 122 / E 150) (Yeast), this protein is Golgi to ER traffic protein 1.